We begin with the raw amino-acid sequence, 255 residues long: Ribosomal RNA small subunit methyltransferase A (255 aa).

S-adenosyl-L-methionine contacts are provided by Asn12, Leu14, Gly39, Glu60, Asp84, and Asn106.

Belongs to the class I-like SAM-binding methyltransferase superfamily. rRNA adenine N(6)-methyltransferase family. RsmA subfamily.

Its subcellular location is the cytoplasm. The enzyme catalyses adenosine(1518)/adenosine(1519) in 16S rRNA + 4 S-adenosyl-L-methionine = N(6)-dimethyladenosine(1518)/N(6)-dimethyladenosine(1519) in 16S rRNA + 4 S-adenosyl-L-homocysteine + 4 H(+). Functionally, specifically dimethylates two adjacent adenosines (A1518 and A1519) in the loop of a conserved hairpin near the 3'-end of 16S rRNA in the 30S particle. May play a critical role in biogenesis of 30S subunits. This chain is Ribosomal RNA small subunit methyltransferase A, found in Herminiimonas arsenicoxydans.